The chain runs to 402 residues: Tryptophan synthase beta chain (402 aa).

Lysine 92 bears the N6-(pyridoxal phosphate)lysine mark.

Belongs to the TrpB family. In terms of assembly, tetramer of two alpha and two beta chains. Pyridoxal 5'-phosphate serves as cofactor.

The catalysed reaction is (1S,2R)-1-C-(indol-3-yl)glycerol 3-phosphate + L-serine = D-glyceraldehyde 3-phosphate + L-tryptophan + H2O. It functions in the pathway amino-acid biosynthesis; L-tryptophan biosynthesis; L-tryptophan from chorismate: step 5/5. The beta subunit is responsible for the synthesis of L-tryptophan from indole and L-serine. This Staphylococcus epidermidis (strain ATCC 35984 / DSM 28319 / BCRC 17069 / CCUG 31568 / BM 3577 / RP62A) protein is Tryptophan synthase beta chain.